The sequence spans 509 residues: Photosystem II CP47 reaction center protein (509 aa).

A run of 6 helical transmembrane segments spans residues 21–36 (AVHLMHTALVAGWAGS), 101–115 (IGLSGLLFLAAIWHW), 140–156 (GIHLFLSGLLCFGFGAF), 203–218 (IAAGIVGILAGLFHLS), 237–252 (VLSSSISAVFFAAFIV), and 457–472 (SFALIFFFGHLWHGGR).

This sequence belongs to the PsbB/PsbC family. PsbB subfamily. PSII is composed of 1 copy each of membrane proteins PsbA, PsbB, PsbC, PsbD, PsbE, PsbF, PsbH, PsbI, PsbJ, PsbK, PsbL, PsbM, PsbT, PsbX, PsbY, PsbZ, Psb30/Ycf12, at least 3 peripheral proteins of the oxygen-evolving complex and a large number of cofactors. It forms dimeric complexes. Binds multiple chlorophylls. PSII binds additional chlorophylls, carotenoids and specific lipids. serves as cofactor.

Its subcellular location is the plastid. The protein resides in the cyanelle thylakoid membrane. Functionally, one of the components of the core complex of photosystem II (PSII). It binds chlorophyll and helps catalyze the primary light-induced photochemical processes of PSII. PSII is a light-driven water:plastoquinone oxidoreductase, using light energy to abstract electrons from H(2)O, generating O(2) and a proton gradient subsequently used for ATP formation. The polypeptide is Photosystem II CP47 reaction center protein (Cyanophora paradoxa).